Here is a 912-residue protein sequence, read N- to C-terminus: Bifunctional uridylyltransferase/uridylyl-removing enzyme (912 aa).

The interval M1–K369 is uridylyltransferase. Residues K370 to T722 form a uridylyl-removing region. The region spanning V486–L608 is the HD domain. 2 ACT domains span residues L723 to Q802 and V834 to A912.

Belongs to the GlnD family. It depends on Mg(2+) as a cofactor.

It catalyses the reaction [protein-PII]-L-tyrosine + UTP = [protein-PII]-uridylyl-L-tyrosine + diphosphate. The enzyme catalyses [protein-PII]-uridylyl-L-tyrosine + H2O = [protein-PII]-L-tyrosine + UMP + H(+). Its activity is regulated as follows. Uridylyltransferase (UTase) activity is inhibited by glutamine, while glutamine activates uridylyl-removing (UR) activity. Functionally, modifies, by uridylylation and deuridylylation, the PII regulatory proteins (GlnB and homologs), in response to the nitrogen status of the cell that GlnD senses through the glutamine level. Under low glutamine levels, catalyzes the conversion of the PII proteins and UTP to PII-UMP and PPi, while under higher glutamine levels, GlnD hydrolyzes PII-UMP to PII and UMP (deuridylylation). Thus, controls uridylylation state and activity of the PII proteins, and plays an important role in the regulation of nitrogen assimilation and metabolism. In Novosphingobium aromaticivorans (strain ATCC 700278 / DSM 12444 / CCUG 56034 / CIP 105152 / NBRC 16084 / F199), this protein is Bifunctional uridylyltransferase/uridylyl-removing enzyme.